We begin with the raw amino-acid sequence, 1122 residues long: Histone deacetylase 5 (1122 aa).

A disordered region spans residues 1–24 (MNSPNESDGMSGREPSLEILPRTS). Lysine 35 participates in a covalent cross-link: Glycyl lysine isopeptide (Lys-Gly) (interchain with G-Cter in SUMO2). Disordered regions lie at residues 41–60 (AMPS…VELR) and 196–281 (KEPT…SSPL). Over residues 247–258 (DSRDDFPLRKTA) the composition is skewed to basic and acidic residues. Position 259 is a phosphoserine; by AMPK, CaMK1, SIK1 and PKD/PRKD1 (serine 259). Positions 272-281 (KVAERRSSPL) are enriched in basic and acidic residues. The residue at position 292 (threonine 292) is a Phosphothreonine; by PKC. 2 disordered regions span residues 302–343 (GAGP…NIPT) and 481–504 (MRTV…LPQS). The segment covering 312–327 (NSAPGSGPSSPNSSHS) has biased composition (low complexity). Positions 328 to 340 (TIAENGFTGSVPN) are enriched in polar residues. Over residues 494 to 504 (SRTQSSPLPQS) the composition is skewed to low complexity. The residue at position 498 (serine 498) is a Phosphoserine; by AMPK, CaMK1, SIK1 and PKD/PRKD1. N6-acetyllysine is present on lysine 533. The disordered stretch occupies residues 536–625 (TKTGELPRQP…GPDLEEPGAG (90 aa)). The segment covering 581–621 (STQEDLEEEDEEDDGEEEEDCIQVKDEEGESGAEEGPDLEE) has biased composition (acidic residues). A phosphoserine mark is found at serine 611 and serine 661. Residues 684 to 1028 (GVVYDTFMLK…VSALLSVELQ (345 aa)) are histone deacetylase. Zn(2+)-binding residues include cysteine 696, cysteine 698, histidine 704, and cysteine 781. Residue histidine 833 is part of the active site. The short motif at 1081-1122 (EEAETVSAMALLSVGAEQAQAAAAREHSPRPAEEPMEQEPAL) is the Nuclear export signal element. Residues 1097-1122 (EQAQAAAAREHSPRPAEEPMEQEPAL) form a disordered region. Positions 1104–1113 (AREHSPRPAE) are enriched in basic and acidic residues. Serine 1108 bears the Phosphoserine mark.

This sequence belongs to the histone deacetylase family. HD type 2 subfamily. In terms of assembly, interacts with AHRR, BAHD1, BCOR, HDAC7, HDAC9, CTBP1, MEF2C, NCOR2, NRIP1, PHB2 and a 14-3-3 chaperone protein. Interacts with BCL6, DDIT3/CHOP, GRK5, KDM5B and MYOCD. Interacts with EP300 in the presence of TFAP2C. Interacts with ANKRA2. Interacts with CUL7 (as part of the 3M complex); negatively regulated by ANKRA2. Interacts with ZBTB7B; the interaction allows the recruitment of HDAC4 on CD8 loci for deacetylation and possible inhibition of CD8 genes expression. Interacts with RARA. Phosphorylated by AMPK, CaMK1, SIK1 and PRKD1 at Ser-259 and Ser-498. The phosphorylation is required for the export to the cytoplasm and inhibition. Phosphorylated by the PKC kinases PKN1 and PKN2, impairing nuclear import. Phosphorylated by GRK5, leading to nuclear export of HDAC5 and allowing MEF2-mediated transcription. In terms of processing, ubiquitinated. Polyubiquitination however does not lead to its degradation. Ubiquitous.

Its subcellular location is the nucleus. The protein resides in the cytoplasm. It catalyses the reaction N(6)-acetyl-L-lysyl-[histone] + H2O = L-lysyl-[histone] + acetate. Responsible for the deacetylation of lysine residues on the N-terminal part of the core histones (H2A, H2B, H3 and H4). Histone deacetylation gives a tag for epigenetic repression and plays an important role in transcriptional regulation, cell cycle progression and developmental events. Histone deacetylases act via the formation of large multiprotein complexes. Involved in muscle maturation by repressing transcription of myocyte enhancer MEF2C. During muscle differentiation, it shuttles into the cytoplasm, allowing the expression of myocyte enhancer factors. Involved in the MTA1-mediated epigenetic regulation of ESR1 expression in breast cancer. Serves as a corepressor of RARA and causes its deacetylation. In association with RARA, plays a role in the repression of microRNA-10a and thereby in the inflammatory response. The chain is Histone deacetylase 5 (HDAC5) from Homo sapiens (Human).